Consider the following 511-residue polypeptide: Gap junction alpha-3 protein (511 aa).

Residues 2-15 lie within the membrane without spanning it; the sequence is GDWSFLGRLLENAQ. Residues 16–19 lie on the Cytoplasmic side of the membrane; the sequence is EHST. The helical transmembrane segment at 20-40 threads the bilayer; sequence VIGKVWLTVLFIFRILVLGAA. Residues 41–71 are Extracellular-facing; it reads AEEVWGDEQSDFTCNTQQPGCENVCYDKAFP. 3 disulfide bridges follow: Cys54/Cys214, Cys61/Cys208, and Cys65/Cys203. The helical transmembrane segment at 72-92 threads the bilayer; the sequence is ISHIRFWVLQIIFVSTPTLIY. At 93–174 the chain is on the cytoplasmic side; that stretch reads LGHVLHIVRM…GALLRTYIFN (82 aa). Basic and acidic residues predominate over residues 110–119; the sequence is EEELKKRGSV. Residues 110 to 143 are disordered; that stretch reads EEELKKRGSVKDNNYPGAATSGGGSGGGNNFKDP. A compositionally biased stretch (gly residues) spans 129–138; that stretch reads TSGGGSGGGN. Residues 175 to 195 traverse the membrane as a helical segment; it reads IIFKTLFEVGFIVGQYFLYGF. Topologically, residues 196–223 are extracellular; that stretch reads ELKPVYQCSRPPCPHTVDCFISRPTEKT. Residues 224 to 244 form a helical membrane-spanning segment; sequence IFIIFMLVVASVSLLLNMLEI. Residues 245–511 lie on the Cytoplasmic side of the membrane; sequence YHLGWKKLKQ…SRARSDDLAV (267 aa). The interval 397–511 is disordered; sequence AEQQGKAPSS…SRARSDDLAV (115 aa). Low complexity-rich tracts occupy residues 403–415 and 440–456; these read APSS…TPSS and TTTN…ASGS.

The protein belongs to the connexin family. A hemichannel or connexon is composed of a hexamer of connexins. A functional gap junction is formed by the apposition of two hemichannels. During early stages of lens development, interacts with the C-terminus of MIP. In terms of tissue distribution, detected in eye lens.

It is found in the cell membrane. The protein resides in the cell junction. The protein localises to the gap junction. In terms of biological role, structural component of lens fiber gap junctions. Gap junctions are dodecameric channels that connect the cytoplasm of adjoining cells. They are formed by the docking of two hexameric hemichannels, one from each cell membrane. Small molecules and ions diffuse from one cell to a neighboring cell via the central pore. The protein is Gap junction alpha-3 protein (GJA3) of Gallus gallus (Chicken).